The chain runs to 254 residues: Triosephosphate isomerase (254 aa).

Asn-10–Lys-12 provides a ligand contact to substrate. Catalysis depends on His-99, which acts as the Electrophile. The Proton acceptor role is filled by Glu-169. Substrate-binding positions include Gly-175, Ser-215, and Gly-236–Gly-237.

The protein belongs to the triosephosphate isomerase family. Homodimer.

It is found in the cytoplasm. It carries out the reaction D-glyceraldehyde 3-phosphate = dihydroxyacetone phosphate. It participates in carbohydrate biosynthesis; gluconeogenesis. It functions in the pathway carbohydrate degradation; glycolysis; D-glyceraldehyde 3-phosphate from glycerone phosphate: step 1/1. In terms of biological role, involved in the gluconeogenesis. Catalyzes stereospecifically the conversion of dihydroxyacetone phosphate (DHAP) to D-glyceraldehyde-3-phosphate (G3P). In Chlamydia caviae (strain ATCC VR-813 / DSM 19441 / 03DC25 / GPIC) (Chlamydophila caviae), this protein is Triosephosphate isomerase.